A 422-amino-acid polypeptide reads, in one-letter code: UDP-N-acetylglucosamine 1-carboxyvinyltransferase (422 aa).

Phosphoenolpyruvate is bound at residue 22–23; the sequence is KN. Residue R94 participates in UDP-N-acetyl-alpha-D-glucosamine binding. Catalysis depends on C118, which acts as the Proton donor. C118 is subject to 2-(S-cysteinyl)pyruvic acid O-phosphothioketal. UDP-N-acetyl-alpha-D-glucosamine-binding positions include 123–127, D309, and I331; that span reads RPVDL.

The protein belongs to the EPSP synthase family. MurA subfamily.

It localises to the cytoplasm. It catalyses the reaction phosphoenolpyruvate + UDP-N-acetyl-alpha-D-glucosamine = UDP-N-acetyl-3-O-(1-carboxyvinyl)-alpha-D-glucosamine + phosphate. It participates in cell wall biogenesis; peptidoglycan biosynthesis. Functionally, cell wall formation. Adds enolpyruvyl to UDP-N-acetylglucosamine. The chain is UDP-N-acetylglucosamine 1-carboxyvinyltransferase from Cereibacter sphaeroides (strain KD131 / KCTC 12085) (Rhodobacter sphaeroides).